A 48-amino-acid chain; its full sequence is Fimbrial assembly protein, serogroup E2 (48 aa).

This Dichelobacter nodosus (Bacteroides nodosus) protein is Fimbrial assembly protein, serogroup E2 (fimB).